The following is a 420-amino-acid chain: MFIHIVGPGDSLFSIGRRYGASVDQIRGVNGLDETNIVPGQALLIPLYVYTVQPRDTLTAIAAKAFVPLERLRAANPGISPNALQAGAKITIPSISNYIAGTLSFYVLRNPDLDRELINDYAPYSSSISIFEYHIAPNGDIANQLNDAAAIETTWQRRVTPLATITNLTSGGFSTEIVHQVLNNPTARTNLVNNIYDLVSTRGYGGVTIDFEQVSAADRDLFTGFLRQLRDRLQAGGYVLTIAVPAKTSDNIPWLRGYDYGGIGAVVNYMFIMAYDWHHAGSEPGPVAPITEIRRTIEFTIAQVPSRKIIIGVPLYGYDWIIPYQPGTVASAISNQNAIERAMRYQAPIQYSAEYQSPFFRYSDQQGRTHEVWFEDVRSMSRKMQIVREYRLQAIGAWQLTLGFTPGPWLLRKFFTIRKV.

2 consecutive LysM domains span residues Phe2–Ile45 and Tyr48–Ile92. The GH18 domain occupies Ala100–Val420. Catalysis depends on Glu212, which acts as the Proton donor.

Belongs to the glycosyl hydrolase 18 family. Chitinase class II subfamily.

Its subcellular location is the spore wall. The polypeptide is Putative sporulation-specific glycosylase YdhD (ydhD) (Bacillus subtilis (strain 168)).